We begin with the raw amino-acid sequence, 326 residues long: N-acetyl-gamma-glutamyl-phosphate reductase (326 aa).

Cys-155 is a catalytic residue.

The protein belongs to the NAGSA dehydrogenase family. Type 1 subfamily.

It localises to the cytoplasm. The enzyme catalyses N-acetyl-L-glutamate 5-semialdehyde + phosphate + NADP(+) = N-acetyl-L-glutamyl 5-phosphate + NADPH + H(+). The protein operates within amino-acid biosynthesis; L-arginine biosynthesis; N(2)-acetyl-L-ornithine from L-glutamate: step 3/4. Its function is as follows. Catalyzes the NADPH-dependent reduction of N-acetyl-5-glutamyl phosphate to yield N-acetyl-L-glutamate 5-semialdehyde. The chain is N-acetyl-gamma-glutamyl-phosphate reductase from Shewanella sp. (strain MR-4).